A 206-amino-acid polypeptide reads, in one-letter code: Thiamine-phosphate synthase (206 aa).

4-amino-2-methyl-5-(diphosphooxymethyl)pyrimidine-binding positions include 36–40 (QLRAK) and Asn-68. Residues Asp-69 and Asp-88 each coordinate Mg(2+). Ser-105 is a binding site for 4-amino-2-methyl-5-(diphosphooxymethyl)pyrimidine. 131-133 (TPT) is a binding site for 2-[(2R,5Z)-2-carboxy-4-methylthiazol-5(2H)-ylidene]ethyl phosphate. Lys-134 provides a ligand contact to 4-amino-2-methyl-5-(diphosphooxymethyl)pyrimidine. 2-[(2R,5Z)-2-carboxy-4-methylthiazol-5(2H)-ylidene]ethyl phosphate is bound at residue Gly-162.

The protein belongs to the thiamine-phosphate synthase family. Mg(2+) is required as a cofactor.

It carries out the reaction 2-[(2R,5Z)-2-carboxy-4-methylthiazol-5(2H)-ylidene]ethyl phosphate + 4-amino-2-methyl-5-(diphosphooxymethyl)pyrimidine + 2 H(+) = thiamine phosphate + CO2 + diphosphate. It catalyses the reaction 2-(2-carboxy-4-methylthiazol-5-yl)ethyl phosphate + 4-amino-2-methyl-5-(diphosphooxymethyl)pyrimidine + 2 H(+) = thiamine phosphate + CO2 + diphosphate. The enzyme catalyses 4-methyl-5-(2-phosphooxyethyl)-thiazole + 4-amino-2-methyl-5-(diphosphooxymethyl)pyrimidine + H(+) = thiamine phosphate + diphosphate. The protein operates within cofactor biosynthesis; thiamine diphosphate biosynthesis; thiamine phosphate from 4-amino-2-methyl-5-diphosphomethylpyrimidine and 4-methyl-5-(2-phosphoethyl)-thiazole: step 1/1. In terms of biological role, condenses 4-methyl-5-(beta-hydroxyethyl)thiazole monophosphate (THZ-P) and 2-methyl-4-amino-5-hydroxymethyl pyrimidine pyrophosphate (HMP-PP) to form thiamine monophosphate (TMP). This Thermus thermophilus (strain ATCC BAA-163 / DSM 7039 / HB27) protein is Thiamine-phosphate synthase.